Reading from the N-terminus, the 392-residue chain is Phosphoglycerate kinase (392 aa).

Residues 21–23 (DFN), Arg-36, 59–62 (HLGR), Arg-113, and Arg-146 each bind substrate. ATP is bound by residues Lys-197, Glu-319, and 345–348 (GGDT).

It belongs to the phosphoglycerate kinase family. Monomer.

The protein resides in the cytoplasm. The enzyme catalyses (2R)-3-phosphoglycerate + ATP = (2R)-3-phospho-glyceroyl phosphate + ADP. Its pathway is carbohydrate degradation; glycolysis; pyruvate from D-glyceraldehyde 3-phosphate: step 2/5. The polypeptide is Phosphoglycerate kinase (Francisella philomiragia subsp. philomiragia (strain ATCC 25017 / CCUG 19701 / FSC 153 / O#319-036)).